Consider the following 479-residue polypeptide: Ribulose bisphosphate carboxylase large chain (479 aa).

Residues 1–2 (MS) constitute a propeptide that is removed on maturation. P3 bears the N-acetylproline mark. K14 bears the N6,N6,N6-trimethyllysine mark. Substrate is bound by residues N123 and T173. K175 functions as the Proton acceptor in the catalytic mechanism. Position 177 (K177) interacts with substrate. Positions 201, 203, and 204 each coordinate Mg(2+). Residue K201 is modified to N6-carboxylysine. The active-site Proton acceptor is H294. Substrate is bound by residues R295, H327, and S379.

It belongs to the RuBisCO large chain family. Type I subfamily. In terms of assembly, heterohexadecamer of 8 large chains and 8 small chains; disulfide-linked. The disulfide link is formed within the large subunit homodimers. The cofactor is Mg(2+). The disulfide bond which can form in the large chain dimeric partners within the hexadecamer appears to be associated with oxidative stress and protein turnover.

The protein localises to the plastid. It localises to the chloroplast. The catalysed reaction is 2 (2R)-3-phosphoglycerate + 2 H(+) = D-ribulose 1,5-bisphosphate + CO2 + H2O. The enzyme catalyses D-ribulose 1,5-bisphosphate + O2 = 2-phosphoglycolate + (2R)-3-phosphoglycerate + 2 H(+). Its function is as follows. RuBisCO catalyzes two reactions: the carboxylation of D-ribulose 1,5-bisphosphate, the primary event in carbon dioxide fixation, as well as the oxidative fragmentation of the pentose substrate in the photorespiration process. Both reactions occur simultaneously and in competition at the same active site. This chain is Ribulose bisphosphate carboxylase large chain, found in Ananas comosus (Pineapple).